The primary structure comprises 763 residues: Phosphoglycerol transferase I (763 aa).

Helical transmembrane passes span 1–21, 26–46, 77–97, and 108–128; these read MSELLSVALFLASVLIYAWKA, WWFAATLTVLGLFVILNITLY, ILPGIGIALALVAVFGALGWV, and VGYSLLALLLALGSVDASPAF.

This sequence belongs to the OpgB family.

The protein localises to the cell inner membrane. It carries out the reaction a phosphatidylglycerol + a membrane-derived-oligosaccharide D-glucose = a 1,2-diacyl-sn-glycerol + a membrane-derived-oligosaccharide 6-(glycerophospho)-D-glucose.. Its pathway is glycan metabolism; osmoregulated periplasmic glucan (OPG) biosynthesis. Functionally, transfers a phosphoglycerol residue from phosphatidylglycerol to the membrane-bound nascent glucan backbones. This chain is Phosphoglycerol transferase I, found in Salmonella choleraesuis (strain SC-B67).